The chain runs to 124 residues: Transcription initiation factor TFIID subunit 13 (124 aa).

Residues 1–16 (MADEEEDPTFEEENEE) show a composition bias toward acidic residues. The interval 1–28 (MADEEEDPTFEEENEEIGGGAEGGQGKR) is disordered. The region spanning 32–74 (FSKELRCMMYGFGDDQNPYTESVDILEDLVIEFITEMTHKAMS) is the Histone-fold domain.

Belongs to the TAF13 family. As to quaternary structure, component of the TFIID basal transcription factor complex, composed of TATA-box-binding protein TBP, and a number of TBP-associated factors (TAFs), including TAF1, TAF2, TAF3, TAF4, TAF5, TAF6, TAF7, TAF8, TAF9, TAF10, TAF11, TAF12 and TAF13. Interacts with TBP, and more strongly with TAF10 and TAF11.

It is found in the nucleus. Functionally, the TFIID basal transcription factor complex plays a major role in the initiation of RNA polymerase II (Pol II)-dependent transcription. TFIID recognizes and binds promoters via its subunit TBP, a TATA-box-binding protein, and promotes assembly of the pre-initiation complex (PIC). The TFIID complex consists of TBP and TBP-associated factors (TAFs), including TAF1, TAF2, TAF3, TAF4, TAF5, TAF6, TAF7, TAF8, TAF9, TAF10, TAF11, TAF12 and TAF13. TAF13, together with TAF11 and TBP, play key roles during promoter binding by the TFIID and TFIIA transcription factor complexes. The chain is Transcription initiation factor TFIID subunit 13 from Bos taurus (Bovine).